The sequence spans 389 residues: Acetylornithine aminotransferase (389 aa).

Residues 96–97 (GT) and Phe-123 each bind pyridoxal 5'-phosphate. Position 126 (Arg-126) interacts with N(2)-acetyl-L-ornithine. 207-210 (DEVQ) contributes to the pyridoxal 5'-phosphate binding site. An N6-(pyridoxal phosphate)lysine modification is found at Lys-236. Ser-264 provides a ligand contact to N(2)-acetyl-L-ornithine. Pyridoxal 5'-phosphate is bound at residue Thr-265.

The protein belongs to the class-III pyridoxal-phosphate-dependent aminotransferase family. ArgD subfamily. Homodimer. It depends on pyridoxal 5'-phosphate as a cofactor.

Its subcellular location is the cytoplasm. The catalysed reaction is N(2)-acetyl-L-ornithine + 2-oxoglutarate = N-acetyl-L-glutamate 5-semialdehyde + L-glutamate. It functions in the pathway amino-acid biosynthesis; L-arginine biosynthesis; N(2)-acetyl-L-ornithine from L-glutamate: step 4/4. This is Acetylornithine aminotransferase from Lactiplantibacillus plantarum (strain ATCC BAA-793 / NCIMB 8826 / WCFS1) (Lactobacillus plantarum).